A 280-amino-acid chain; its full sequence is Ataxin-3 homolog (280 aa).

The Josephin domain occupies 7–187 (GGMLYHEVQE…QECPMSSSSE (181 aa)). The active-site Nucleophile is the C20. The Proton acceptor role is filled by H126. Residue D141 is part of the active site. Composition is skewed to polar residues over residues 183 to 194 (SSSSEASNSFGQ) and 221 to 232 (DNVNQQRRNQAL). The disordered stretch occupies residues 183–240 (SSSSEASNSFGQWLSPEDAERIRKNTSSGSSARNKRSNDNVNQQRRNQALSREEVQAF). The 20-residue stretch at 243–262 (MEDDDLKAAIAASLLDASAA) folds into the UIM domain.

It is found in the nucleus. The catalysed reaction is Thiol-dependent hydrolysis of ester, thioester, amide, peptide and isopeptide bonds formed by the C-terminal Gly of ubiquitin (a 76-residue protein attached to proteins as an intracellular targeting signal).. In terms of biological role, interacts with key regulators of transcription and represses transcription. Acts as a histone-binding protein that regulates transcription. Acts as a deubiquitinating enzyme. The sequence is that of Ataxin-3 homolog from Arabidopsis thaliana (Mouse-ear cress).